Consider the following 390-residue polypeptide: Glutamate 5-kinase (390 aa).

An ATP-binding site is contributed by lysine 29. Positions 69, 156, and 168 each coordinate substrate. Residue 188 to 189 (TD) participates in ATP binding. In terms of domain architecture, PUA spans 295 to 374 (SGSLIVDAGA…EQFDRILGNN (80 aa)).

The protein belongs to the glutamate 5-kinase family.

The protein resides in the cytoplasm. The enzyme catalyses L-glutamate + ATP = L-glutamyl 5-phosphate + ADP. Its pathway is amino-acid biosynthesis; L-proline biosynthesis; L-glutamate 5-semialdehyde from L-glutamate: step 1/2. Its function is as follows. Catalyzes the transfer of a phosphate group to glutamate to form L-glutamate 5-phosphate. The protein is Glutamate 5-kinase of Psychrobacter cryohalolentis (strain ATCC BAA-1226 / DSM 17306 / VKM B-2378 / K5).